Consider the following 6995-residue polypeptide: Fibrous sheath-interacting protein 2 (6995 aa).

Disordered stretches follow at residues 273-292 (EQKI…RKKQ), 308-336 (DTGL…SSKK), and 351-476 (GDQK…TDAP). Residues 359–396 (TSGQVSATVNQSQSSSKDVTKVSASSVTYPAEVQNSSS) show a composition bias toward polar residues. Residues 397–421 (EQKRSEVTKRLSDERGKNSTDDSAR) are compositionally biased toward basic and acidic residues. The segment covering 424–442 (IISTQLSPTRNAKLSQISL) has biased composition (polar residues). Ser-430 carries the post-translational modification Phosphoserine. The span at 443-452 (DHQKEEKEMK) shows a compositional bias: basic and acidic residues. A compositionally biased stretch (polar residues) spans 453-463 (STWNGGLSKKS). A coiled-coil region spans residues 665–692 (LEISLLYDKKAKAMDQIKNLKNVFVNFK). Disordered regions lie at residues 1452–1472 (PDPQ…DPPT), 2554–2595 (KSKR…VPQM), 2699–2731 (TKTK…TPQV), 3182–3270 (PVKM…PNFT), 5489–5665 (GPSA…KYKG), 5719–5740 (SKSS…MTEK), 5823–5878 (KDLS…SKSK), 5943–5996 (KEDE…PDKL), and 6973–6995 (SKVF…QDKR). Positions 2555–2565 (SKREGEMHDSS) are enriched in basic and acidic residues. Residues 3187–3204 (PSNTSDTPRTRRSSQGSV) are compositionally biased toward polar residues. Residues 3220-3231 (SVTSNSSSHISS) are compositionally biased toward low complexity. The span at 3232 to 3250 (CVENTNKSLEPMGRSNSEA) shows a compositional bias: polar residues. Positions 3255 to 3265 (SRHKAHDHGQR) are enriched in basic residues. Residues 5496–5509 (DAKKEDESKVKPAT) show a composition bias toward basic and acidic residues. 3 stretches are compositionally biased toward polar residues: residues 5523–5557 (MKSQ…SPPT), 5565–5625 (QVQQ…QSAM), and 5638–5650 (VQES…TTMK). 2 stretches are compositionally biased toward basic and acidic residues: residues 5719 to 5738 (SKSS…ETMT) and 5829 to 5877 (GHRD…ESKS). The span at 5982–5993 (SDVQKTPEQSSP) shows a compositional bias: polar residues. The span at 6977 to 6995 (SRSSGSIPKSSSPPHQDKR) shows a compositional bias: low complexity.

May interact with AKAP4. As to expression, predominantly expressed in testis.

Functionally, plays a role in spermatogenesis. The protein is Fibrous sheath-interacting protein 2 (Fsip2) of Mus musculus (Mouse).